Reading from the N-terminus, the 263-residue chain is MKIALGIEYNGKNYFGWQRQEKVHSVQAELEKALSFVANEKIEVFCAGRTDSGVHGTGQVVHFETNAIRPEKAWAFGTNANLPDDIAVRWAKEVPDDFHARFSATARRYRYVLYCNKLRSAILPYGITHTHLDLDEHKMQEAGRFLLGENDFSSFRAAQCQSNTPWRNIHHLNVIRRGNFVIVDIKANAFVHHMVRNIVGSLMEVGCGNQPPEWIEWLLAQKNRKLAAPTAKAEGLYLVQVTYPEHFELPQMPLGPLFLADEL.

The Nucleophile role is filled by aspartate 51. A substrate-binding site is contributed by tyrosine 109.

Belongs to the tRNA pseudouridine synthase TruA family. In terms of assembly, homodimer.

It carries out the reaction uridine(38/39/40) in tRNA = pseudouridine(38/39/40) in tRNA. In terms of biological role, formation of pseudouridine at positions 38, 39 and 40 in the anticodon stem and loop of transfer RNAs. This chain is tRNA pseudouridine synthase A, found in Mannheimia succiniciproducens (strain KCTC 0769BP / MBEL55E).